The chain runs to 274 residues: Large ribosomal subunit protein uL2 (274 aa).

2 disordered regions span residues 28-54 (APHAPLLEKKSKSGGRNNNGRITTRHI) and 224-274 (VAMN…RRRK). A compositionally biased stretch (basic and acidic residues) spans 263-274 (KRTDKMIVRRRK).

Belongs to the universal ribosomal protein uL2 family. As to quaternary structure, part of the 50S ribosomal subunit. Forms a bridge to the 30S subunit in the 70S ribosome.

In terms of biological role, one of the primary rRNA binding proteins. Required for association of the 30S and 50S subunits to form the 70S ribosome, for tRNA binding and peptide bond formation. It has been suggested to have peptidyltransferase activity; this is somewhat controversial. Makes several contacts with the 16S rRNA in the 70S ribosome. The sequence is that of Large ribosomal subunit protein uL2 from Pseudomonas savastanoi pv. phaseolicola (strain 1448A / Race 6) (Pseudomonas syringae pv. phaseolicola (strain 1448A / Race 6)).